The chain runs to 301 residues: UDP-N-acetylenolpyruvoylglucosamine reductase 1 (301 aa).

Positions 29-196 constitute an FAD-binding PCMH-type domain; the sequence is KIGGPADILI…LEAEFQLQIG (168 aa). The active site involves Arg174. The active-site Proton donor is Ser225. Glu295 is an active-site residue.

This sequence belongs to the MurB family. FAD is required as a cofactor.

It is found in the cytoplasm. The enzyme catalyses UDP-N-acetyl-alpha-D-muramate + NADP(+) = UDP-N-acetyl-3-O-(1-carboxyvinyl)-alpha-D-glucosamine + NADPH + H(+). It functions in the pathway cell wall biogenesis; peptidoglycan biosynthesis. Functionally, cell wall formation. The protein is UDP-N-acetylenolpyruvoylglucosamine reductase 1 of Bacillus thuringiensis subsp. konkukian (strain 97-27).